Reading from the N-terminus, the 23-residue chain is Coenzyme PQQ synthesis protein A (23 aa).

The pyrroloquinoline quinone (Glu-Tyr) cross-link spans 15-19 (EVTLY).

The protein belongs to the PqqA family.

Its pathway is cofactor biosynthesis; pyrroloquinoline quinone biosynthesis. Functionally, required for coenzyme pyrroloquinoline quinone (PQQ) biosynthesis. PQQ is probably formed by cross-linking a specific glutamate to a specific tyrosine residue and excising these residues from the peptide. The sequence is that of Coenzyme PQQ synthesis protein A from Pseudomonas aeruginosa (strain UCBPP-PA14).